A 228-amino-acid chain; its full sequence is Cytidylate kinase (228 aa).

11–19 (GPAGTGKSS) lines the ATP pocket.

Belongs to the cytidylate kinase family. Type 1 subfamily.

It is found in the cytoplasm. The catalysed reaction is CMP + ATP = CDP + ADP. The enzyme catalyses dCMP + ATP = dCDP + ADP. This chain is Cytidylate kinase, found in Mycobacterium avium (strain 104).